The chain runs to 258 residues: Electron transfer flavoprotein beta subunit lysine methyltransferase (258 aa).

It belongs to the methyltransferase superfamily. ETFBKMT family.

It localises to the cytoplasm. The protein localises to the mitochondrion matrix. It catalyses the reaction L-lysyl-[protein] + 3 S-adenosyl-L-methionine = N(6),N(6),N(6)-trimethyl-L-lysyl-[protein] + 3 S-adenosyl-L-homocysteine + 3 H(+). In terms of biological role, protein-lysine methyltransferase that selectively trimethylates the flavoprotein ETFB in mitochondria. Thereby, may negatively regulate the function of ETFB in electron transfer from Acyl-CoA dehydrogenases to the main respiratory chain. This is Electron transfer flavoprotein beta subunit lysine methyltransferase from Danio rerio (Zebrafish).